A 376-amino-acid polypeptide reads, in one-letter code: Phospho-N-acetylmuramoyl-pentapeptide-transferase (376 aa).

The next 10 membrane-spanning stretches (helical) occupy residues 28–48 (RTIM…PWFI), 76–96 (TMGG…WADL), 100–120 (FVLA…LDDF), 135–155 (YKLI…FLLA), 179–199 (YPIE…VVAT), 211–231 (GLAI…AYIV), 252–272 (AGEL…FLWY), 279–299 (VFMG…LAVF), 307–327 (IILG…VLSF), and 353–373 (KIIV…LASM).

It belongs to the glycosyltransferase 4 family. MraY subfamily. Mg(2+) is required as a cofactor.

The protein resides in the cell inner membrane. The catalysed reaction is UDP-N-acetyl-alpha-D-muramoyl-L-alanyl-gamma-D-glutamyl-meso-2,6-diaminopimeloyl-D-alanyl-D-alanine + di-trans,octa-cis-undecaprenyl phosphate = di-trans,octa-cis-undecaprenyl diphospho-N-acetyl-alpha-D-muramoyl-L-alanyl-D-glutamyl-meso-2,6-diaminopimeloyl-D-alanyl-D-alanine + UMP. The protein operates within cell wall biogenesis; peptidoglycan biosynthesis. Functionally, catalyzes the initial step of the lipid cycle reactions in the biosynthesis of the cell wall peptidoglycan: transfers peptidoglycan precursor phospho-MurNAc-pentapeptide from UDP-MurNAc-pentapeptide onto the lipid carrier undecaprenyl phosphate, yielding undecaprenyl-pyrophosphoryl-MurNAc-pentapeptide, known as lipid I. In Sorangium cellulosum (strain So ce56) (Polyangium cellulosum (strain So ce56)), this protein is Phospho-N-acetylmuramoyl-pentapeptide-transferase.